Consider the following 88-residue polypeptide: Putative membrane protein insertion efficiency factor (88 aa).

Residues 66-88 form a disordered region; sequence DFVPPKKEKNADSEHSCKAHHHH. Positions 69–82 are enriched in basic and acidic residues; the sequence is PPKKEKNADSEHSC.

Belongs to the UPF0161 family.

The protein resides in the cell membrane. Could be involved in insertion of integral membrane proteins into the membrane. The protein is Putative membrane protein insertion efficiency factor of Listeria monocytogenes serotype 4b (strain CLIP80459).